The sequence spans 550 residues: Chaperonin GroEL (550 aa).

Residues 30-33, Lys-51, 87-91, Gly-415, and Asp-496 each bind ATP; these read TLGP and DGTTT. The tract at residues 528 to 550 is disordered; sequence EGGDMPAMPPGGMGGMGGMGGMM. The span at 538–550 shows a compositional bias: gly residues; it reads GGMGGMGGMGGMM.

It belongs to the chaperonin (HSP60) family. As to quaternary structure, forms a cylinder of 14 subunits composed of two heptameric rings stacked back-to-back. Interacts with the co-chaperonin GroES.

The protein localises to the cytoplasm. It catalyses the reaction ATP + H2O + a folded polypeptide = ADP + phosphate + an unfolded polypeptide.. Its function is as follows. Together with its co-chaperonin GroES, plays an essential role in assisting protein folding. The GroEL-GroES system forms a nano-cage that allows encapsulation of the non-native substrate proteins and provides a physical environment optimized to promote and accelerate protein folding. This is Chaperonin GroEL from Chlorobium phaeobacteroides (strain BS1).